The chain runs to 254 residues: Gamma-glutamyl-gamma-aminobutyrate hydrolase PuuD (254 aa).

In terms of domain architecture, Glutamine amidotransferase type-1 spans 16–250 (RNRLKGHATQ…ITACQHHIAE (235 aa)). Cys-114 functions as the Nucleophile in the catalytic mechanism. Active-site residues include His-222 and Glu-224.

Belongs to the peptidase C26 family. As to quaternary structure, homodimer.

The enzyme catalyses 4-(gamma-L-glutamylamino)butanoate + H2O = 4-aminobutanoate + L-glutamate. The protein operates within amine and polyamine degradation; putrescine degradation; 4-aminobutanoate from putrescine: step 4/4. Functionally, involved in the breakdown of putrescine via hydrolysis of the gamma-glutamyl linkage of gamma-glutamyl-gamma-aminobutyrate. This Escherichia coli (strain K12) protein is Gamma-glutamyl-gamma-aminobutyrate hydrolase PuuD (puuD).